A 224-amino-acid chain; its full sequence is Lipoprotein-releasing system ATP-binding protein LolD (224 aa).

An ABC transporter domain is found at 6–224; it reads LEFCNVSKFF…IVNHSLISSI (219 aa). An ATP-binding site is contributed by 43 to 50; the sequence is GASGVGKT.

It belongs to the ABC transporter superfamily. Lipoprotein translocase (TC 3.A.1.125) family. As to quaternary structure, the complex is composed of two ATP-binding proteins (LolD) and two transmembrane proteins (LolC and LolE).

It localises to the cell inner membrane. Its function is as follows. Part of the ABC transporter complex LolCDE involved in the translocation of mature outer membrane-directed lipoproteins, from the inner membrane to the periplasmic chaperone, LolA. Responsible for the formation of the LolA-lipoprotein complex in an ATP-dependent manner. The chain is Lipoprotein-releasing system ATP-binding protein LolD from Neorickettsia sennetsu (strain ATCC VR-367 / Miyayama) (Ehrlichia sennetsu).